Consider the following 255-residue polypeptide: Kallikrein-4 (255 aa).

The first 25 residues, 1 to 25 (MMVTARTPWGWFLGCLILEVTGASA), serve as a signal peptide directing secretion. Residues 26-31 (SSVSSR) constitute a propeptide that is removed on maturation. The Peptidase S1 domain occupies 32-253 (IIQGQDCSPH…FTNWIQTIIQ (222 aa)). Position 41 (histidine 41) interacts with Zn(2+). Cysteine 57 and cysteine 73 are oxidised to a cystine. Histidine 72 functions as the Charge relay system in the catalytic mechanism. Residue glutamate 92 participates in Zn(2+) binding. Catalysis depends on aspartate 117, which acts as the Charge relay system. Asparagine 124 and asparagine 170 each carry an N-linked (GlcNAc...) asparagine glycan. Intrachain disulfides connect cysteine 149–cysteine 214, cysteine 179–cysteine 193, and cysteine 204–cysteine 229. Serine 208 acts as the Charge relay system in catalysis.

The protein belongs to the peptidase S1 family. Kallikrein subfamily. N-glycosylated. The N-glycan structures are of complex diantennary or triantennary type, which may be further modified with up to 2 sialic acid residues.

It localises to the secreted. Has a major role in enamel formation. Required during the maturation stage of tooth development for clearance of enamel proteins and normal structural patterning of the crystalline matrix. The sequence is that of Kallikrein-4 from Mus musculus (Mouse).